A 622-amino-acid chain; its full sequence is MSSIFGENIVSDSIVNMELTNPDNTTTMHPIYETNIEKEVQQEFSDNVSEKETIDSTKSKISLENIQQEMGALAKKIFHKLGVKATDLGFSNEHDDSQDSLQTLAPSPSYVPLLKVIGSSEEVNSNLVLTDLETNTDGYDPKFLISVRKFLMGSPNSGFVVKHEKRLPDGPRVLALRAISSVDEENRKERLSPDSDPVETESVYVDNGELSNQKVETVEISEKEQNDDPAGYSQYLLEFKKSKCQKKVPTLESIEENEGTEPHDNLTFMTDLGTPYYSLGNEFERKQILDEYGLLANDENLVIGHTLRAEYCFMFDESDILQLRNYEHTEKELSVLQFKGVSSRWDFRCCREERLLRLLLCFDSEHTGQSFIQLNDPENENEKEEQNSISIRELSYFSTKLISLILPKEAHKQRYIMLSSLAKTREADFFWSEEEKTNYTNELLSNPCKFLCELDHFDSFPHQQQDLLWKYLAEFSASLELDPNLALWKKQVIFSKIGHPKLLVMPISSFHCVQRFPDLVCVQTSTAETFLSVDRELTTYDLNTIKLLNTAPSRTAQNWLFIMHHLEIVGYLFPHLVHLDKQYSLLDYAKSVEHIPELGTVQRKGFLNKVAFDDNEALLYQV.

The protein is Meiotic expression up-regulated protein 25 (meu25) of Schizosaccharomyces pombe (strain 972 / ATCC 24843) (Fission yeast).